A 360-amino-acid polypeptide reads, in one-letter code: Ribosomal RNA large subunit methyltransferase M (360 aa).

S-adenosyl-L-methionine-binding positions include Ser187, 220–223 (CPGG), Asp239, Asp259, and Asp276. Lys305 functions as the Proton acceptor in the catalytic mechanism.

This sequence belongs to the class I-like SAM-binding methyltransferase superfamily. RNA methyltransferase RlmE family. RlmM subfamily. As to quaternary structure, monomer.

It localises to the cytoplasm. It catalyses the reaction cytidine(2498) in 23S rRNA + S-adenosyl-L-methionine = 2'-O-methylcytidine(2498) in 23S rRNA + S-adenosyl-L-homocysteine + H(+). Functionally, catalyzes the 2'-O-methylation at nucleotide C2498 in 23S rRNA. This is Ribosomal RNA large subunit methyltransferase M from Shewanella pealeana (strain ATCC 700345 / ANG-SQ1).